The sequence spans 690 residues: Highly divergent homeobox (690 aa).

The segment at residues 3–63 (LRSVFTVEQQ…NKRRKMSSKN (61 aa)) is a DNA-binding region (homeobox 1). 2 disordered regions span residues 55 to 76 (KRRK…TSLS) and 112 to 132 (SPAS…QITE). Over residues 64–76 (SESGTATTGTSLS) the composition is skewed to low complexity. The span at 113-123 (PASSSSRQGTN) shows a compositional bias: polar residues. Residues Lys135, Lys140, Lys144, Lys163, Lys172, Lys194, Lys212, Lys221, and Lys232 each participate in a glycyl lysine isopeptide (Lys-Gly) (interchain with G-Cter in SUMO2) cross-link. A DNA-binding region (homeobox 2) is located at residues 435-498 (ALQDRTQFSD…NRRRKYRLMG (64 aa)). The tract at residues 501 to 539 (VPPPRGGPADFSEQPESGSLSALTPGEEAGPEVGEDNDR) is disordered. Lys613 is covalently cross-linked (Glycyl lysine isopeptide (Lys-Gly) (interchain with G-Cter in SUMO2)). The disordered stretch occupies residues 664-690 (FNHASLEPDDTSFSVSSLSEKNVSESL). Polar residues predominate over residues 674 to 690 (TSFSVSSLSEKNVSESL).

It is found in the nucleus. The polypeptide is Highly divergent homeobox (HDX) (Homo sapiens (Human)).